A 152-amino-acid polypeptide reads, in one-letter code: Endoribonuclease YbeY (152 aa).

Positions 112, 116, and 122 each coordinate Zn(2+).

The protein belongs to the endoribonuclease YbeY family. Zn(2+) serves as cofactor.

Its subcellular location is the cytoplasm. Functionally, single strand-specific metallo-endoribonuclease involved in late-stage 70S ribosome quality control and in maturation of the 3' terminus of the 16S rRNA. The polypeptide is Endoribonuclease YbeY (Pseudoalteromonas translucida (strain TAC 125)).